Consider the following 219-residue polypeptide: MKLHFVKNLADRREIMMNYHLLARGIRDPAVLKAMLEVPREAFVAEGMEELAYDDYALPIDEGQTISQPYIVAYMAESLELSAADRVLEIGTGSGYAAAVLSRIVSTVYTVERLAGLARSAHQRLEMLSYGNIHVLEGDGTLGWPEYAPYDAIVVTAGAPDLPKPLLSQLSVGGRLVIPVGATPYLQMLVRVRRVSEEEYRSEELCPVRFVPLIGAAGW.

The active site involves Ser-67.

This sequence belongs to the methyltransferase superfamily. L-isoaspartyl/D-aspartyl protein methyltransferase family.

It localises to the cytoplasm. It carries out the reaction [protein]-L-isoaspartate + S-adenosyl-L-methionine = [protein]-L-isoaspartate alpha-methyl ester + S-adenosyl-L-homocysteine. In terms of biological role, catalyzes the methyl esterification of L-isoaspartyl residues in peptides and proteins that result from spontaneous decomposition of normal L-aspartyl and L-asparaginyl residues. It plays a role in the repair and/or degradation of damaged proteins. This is Protein-L-isoaspartate O-methyltransferase 1 from Geotalea uraniireducens (strain Rf4) (Geobacter uraniireducens).